We begin with the raw amino-acid sequence, 575 residues long: Thiol:disulfide interchange protein DsbD (575 aa).

The N-terminal stretch at 1–24 is a signal peptide; the sequence is MIKRTLMLFLLLCSPLLTPAAANA. 2 disulfide bridges follow: C126–C132 and C192–C314. The next 8 helical transmembrane spans lie at 180 to 200, 216 to 236, 253 to 273, 297 to 317, 336 to 356, 367 to 387, 394 to 414, and 425 to 445; these read AILI…YPLI, IFWL…LLGL, YVLI…FGLY, LFGV…CTTA, GLTL…VTLF, WMQY…VFLL, AWGI…GFVL, and VIQL…QDWF. The Thioredoxin domain occupies 444–575; sequence WFWGTTVTQQ…FNEHLQHLPK (132 aa). C490 and C493 form a disulfide bridge.

It belongs to the thioredoxin family. DsbD subfamily.

The protein resides in the cell inner membrane. The catalysed reaction is [protein]-dithiol + NAD(+) = [protein]-disulfide + NADH + H(+). It carries out the reaction [protein]-dithiol + NADP(+) = [protein]-disulfide + NADPH + H(+). Functionally, required to facilitate the formation of correct disulfide bonds in some periplasmic proteins and for the assembly of the periplasmic c-type cytochromes. Acts by transferring electrons from cytoplasmic thioredoxin to the periplasm. This transfer involves a cascade of disulfide bond formation and reduction steps. This Photorhabdus laumondii subsp. laumondii (strain DSM 15139 / CIP 105565 / TT01) (Photorhabdus luminescens subsp. laumondii) protein is Thiol:disulfide interchange protein DsbD.